A 395-amino-acid chain; its full sequence is Dihydroorotate dehydrogenase (quinone), mitochondrial (395 aa).

A mitochondrion; not cleaved-targeting transit peptide spans Met-1–Ala-10. Over Met-1–Ala-10 the chain is Mitochondrial matrix. The helical transmembrane segment at Gln-11–Ala-30 threads the bilayer. Residues Thr-31–Arg-395 are Mitochondrial intermembrane-facing. FMN is bound by residues Ala-95–Lys-99 and Ser-119. Position 99 (Lys-99) interacts with substrate. Asn-144 to Phe-148 is a binding site for substrate. FMN is bound by residues Asn-180 and Asn-211. Asn-211–Asn-216 is a substrate binding site. Ser-214 functions as the Nucleophile in the catalytic mechanism. FMN is bound by residues Lys-254 and Thr-282. Asn-283–Ser-284 is a binding site for substrate. FMN contacts are provided by residues Gly-305, Gly-334, and Tyr-355 to Thr-356.

It belongs to the dihydroorotate dehydrogenase family. Type 2 subfamily. Monomer. FMN is required as a cofactor. The uncleaved transit peptide is required for mitochondrial targeting and proper membrane integration.

The protein localises to the mitochondrion inner membrane. The enzyme catalyses (S)-dihydroorotate + a quinone = orotate + a quinol. Its pathway is pyrimidine metabolism; UMP biosynthesis via de novo pathway; orotate from (S)-dihydroorotate (quinone route): step 1/1. In terms of biological role, catalyzes the conversion of dihydroorotate to orotate with quinone as electron acceptor. Required for UMP biosynthesis via de novo pathway. This chain is Dihydroorotate dehydrogenase (quinone), mitochondrial (DHODH), found in Bos taurus (Bovine).